The following is a 291-amino-acid chain: Protease HtpX homolog (291 aa).

2 consecutive transmembrane segments (helical) span residues 11 to 31 and 34 to 54; these read INTF…GLLA and FLGM…ACVQ. Histidine 140 lines the Zn(2+) pocket. Glutamate 141 is a catalytic residue. A Zn(2+)-binding site is contributed by histidine 144. 2 helical membrane passes run 155 to 175 and 186 to 206; these read IVFG…RALI and AFSF…AMLV. Residue glutamate 215 participates in Zn(2+) binding.

Belongs to the peptidase M48B family. Zn(2+) is required as a cofactor.

It localises to the cell membrane. In Tropheryma whipplei (strain Twist) (Whipple's bacillus), this protein is Protease HtpX homolog.